A 165-amino-acid chain; its full sequence is MKTSRLPIAIQQAVMRRLREKLAQANLKLGRNYPEPKLSYTQRGTSAGTAWLESYEIRLNPVLLLENSEAFIEEVVPHELAHLLVWKHFGRVAPHGKEWKWMMENVLGVPARRTHQFELQSVRRNTFPYRCKCQEHQLTVRRHNRVVRGEAVYRCVHCGEQLVAK.

Positions 20 to 163 (EKLAQANLKL…RCVHCGEQLV (144 aa)) constitute a SprT-like domain. His78 contributes to the Zn(2+) binding site. Glu79 is a catalytic residue. His82 provides a ligand contact to Zn(2+).

It belongs to the SprT family. Zn(2+) serves as cofactor.

It is found in the cytoplasm. The polypeptide is Protein SprT (Escherichia coli (strain K12 / MC4100 / BW2952)).